A 570-amino-acid chain; its full sequence is Transmembrane 7 superfamily member 3 (570 aa).

An N-terminal signal peptide occupies residues 1–21 (MGFLQLLVVAVLASEHRVAGA). N-linked (GlcNAc...) asparagine glycans are attached at residues Asn27, Asn61, Asn75, Asn87, and Asn264. A run of 7 helical transmembrane segments spans residues 296 to 313 (VFFTLFALLGFFICFFGH), 320 to 342 (LFFIGFIIMGFFFYILITRLTPI), 347 to 369 (NLILTAVTGSVGGMFLVAVWWRF), 371 to 393 (ILSICMLCVGLVLGFLISSVTFF), 408 to 430 (FWVTFSCIAILIPVVFMGCLRIL), 437 to 459 (VIGSYSVVLAIDSYWSTSLSYIT), and 479 to 501 (PFQTNDFIILAVWGMLAVSGITL).

In terms of tissue distribution, widely expressed. Highly expressed in kidney and pancreas.

The protein resides in the cell membrane. Involved in the inhibition of cytokine-induced death of pancreatic beta cells. Involved in the promotion of insulin secretion from pancreatic beta cells. Is a downstream transcriptional target of p53/TP53, and acts as a pro-survival homeostatic factor that attenuates the development of cellular stress. Maintains protein homeostasis and promotes cell survival through attenuation of endoplasmic reticulum (ER) stress and the subsequent induction of unfolded protein response (UPR). The chain is Transmembrane 7 superfamily member 3 (TM7SF3) from Homo sapiens (Human).